The sequence spans 312 residues: MNKKKFLFFLMGPTAIGKSSLALEIKKKFPLIELISVDSKLVYKGLNIGTDKPNKSDLKNFSYKLVNIVKPKNIYTVINFYNDVLKEIKNILKSGKIPLLVGGTMLYFKILLNGFANLPPSNSIIRKYIFKNICLKKKKNLFNLLKKIDPISSKKIHINDVQRVLRAVEVFFVSGGFPLSELIKFFHNKLPYKVFQFGLIPDNKEHLYKKIEKRFFFMLKSGFKKEVQNLYNQKFLDPKLPSMNSIGYKQMLLYLKNKYTYFQMIKETIKSTHKLVKHQLTWLKKWPNIIFIKDNKKDLLITKIYKILNRNL.

12–19 (GPTAIGKS) contributes to the ATP binding site. Position 14–19 (14–19 (TAIGKS)) interacts with substrate. Interaction with substrate tRNA stretches follow at residues 38–41 (DSKL) and 162–166 (QRVLR).

Belongs to the IPP transferase family. In terms of assembly, monomer. The cofactor is Mg(2+).

It carries out the reaction adenosine(37) in tRNA + dimethylallyl diphosphate = N(6)-dimethylallyladenosine(37) in tRNA + diphosphate. Catalyzes the transfer of a dimethylallyl group onto the adenine at position 37 in tRNAs that read codons beginning with uridine, leading to the formation of N6-(dimethylallyl)adenosine (i(6)A). The polypeptide is tRNA dimethylallyltransferase (Buchnera aphidicola subsp. Cinara cedri (strain Cc)).